A 224-amino-acid polypeptide reads, in one-letter code: UPF0758 protein AHA_0160 (224 aa).

An MPN domain is found at 102 to 224; it reads PLTSPQLTRD…TVSFAERGWL (123 aa). Positions 173, 175, and 186 each coordinate Zn(2+). Positions 173-186 match the JAMM motif motif; it reads HNHPSGVAEPSRAD.

This sequence belongs to the UPF0758 family.

The polypeptide is UPF0758 protein AHA_0160 (Aeromonas hydrophila subsp. hydrophila (strain ATCC 7966 / DSM 30187 / BCRC 13018 / CCUG 14551 / JCM 1027 / KCTC 2358 / NCIMB 9240 / NCTC 8049)).